Reading from the N-terminus, the 372-residue chain is N-methyl-L-tryptophan oxidase (372 aa).

Position 4 to 34 (D4 to H34) interacts with FAD. Position 308 is an S-8alpha-FAD cysteine (C308).

It belongs to the MSOX/MTOX family. MTOX subfamily. Monomer. FAD serves as cofactor.

The enzyme catalyses N(alpha)-methyl-L-tryptophan + O2 + H2O = L-tryptophan + formaldehyde + H2O2. In terms of biological role, catalyzes the oxidative demethylation of N-methyl-L-tryptophan. This is N-methyl-L-tryptophan oxidase from Escherichia coli O127:H6 (strain E2348/69 / EPEC).